The following is a 373-amino-acid chain: Protodeoxyviolaceinate monooxygenase (373 aa).

Position 2-20 (2-20) interacts with FAD; sequence KILVIGAGPAGLVFASQLK.

It depends on FAD as a cofactor.

It carries out the reaction protodeoxyviolaceinate + NADH + O2 + H(+) = protoviolaceinate + NAD(+) + H2O. The enzyme catalyses protodeoxyviolaceinate + NADPH + O2 + H(+) = protoviolaceinate + NADP(+) + H2O. Its pathway is pigment biosynthesis; violacein biosynthesis. In terms of biological role, catalyzes the oxygenation of the 6-position of protodeoxyviolaceinate to form proviolacein. This chain is Protodeoxyviolaceinate monooxygenase (vioD), found in Chromobacterium violaceum (strain ATCC 12472 / DSM 30191 / JCM 1249 / CCUG 213 / NBRC 12614 / NCIMB 9131 / NCTC 9757 / MK).